A 146-amino-acid polypeptide reads, in one-letter code: Nitric oxide reductase subunit C (146 aa).

The chain crosses the membrane as a helical; Signal-anchor span at residues 13 to 29 (IYFGGSVFFFLVFLGLT). Residues C61, C64, and H65 each contribute to the heme c site.

Heterodimer of cytochromes b (large subunit) and c (small subunit).

The protein localises to the cell membrane. Its function is as follows. Component of the anaerobic respiratory chain that transforms nitrate to dinitrogen (denitrification). In Stutzerimonas stutzeri (Pseudomonas stutzeri), this protein is Nitric oxide reductase subunit C (norC).